The chain runs to 100 residues: Integration host factor subunit alpha (100 aa).

This sequence belongs to the bacterial histone-like protein family. As to quaternary structure, heterodimer of an alpha and a beta chain.

This protein is one of the two subunits of integration host factor, a specific DNA-binding protein that functions in genetic recombination as well as in transcriptional and translational control. The chain is Integration host factor subunit alpha from Hahella chejuensis (strain KCTC 2396).